Consider the following 387-residue polypeptide: Pyrophosphate--fructose 6-phosphate 1-phosphotransferase 3 (387 aa).

Residue glycine 15 participates in diphosphate binding. Residue aspartate 114 coordinates Mg(2+). Residues 140-142, 186-188, glutamate 247, and 308-311 contribute to the substrate site; these read TID, MGR, and YELR. Aspartate 142 serves as the catalytic Proton acceptor.

The protein belongs to the phosphofructokinase type A (PFKA) family. PPi-dependent PFK group II subfamily. Clade 'Short' sub-subfamily. As to quaternary structure, homotetramer. Mg(2+) serves as cofactor.

The protein resides in the cytoplasm. The enzyme catalyses beta-D-fructose 6-phosphate + diphosphate = beta-D-fructose 1,6-bisphosphate + phosphate + H(+). Its pathway is carbohydrate degradation; glycolysis; D-glyceraldehyde 3-phosphate and glycerone phosphate from D-glucose: step 3/4. With respect to regulation, non-allosteric. Its function is as follows. Catalyzes the phosphorylation of D-fructose 6-phosphate, the first committing step of glycolysis. Uses inorganic phosphate (PPi) as phosphoryl donor instead of ATP like common ATP-dependent phosphofructokinases (ATP-PFKs), which renders the reaction reversible, and can thus function both in glycolysis and gluconeogenesis. Consistently, PPi-PFK can replace the enzymes of both the forward (ATP-PFK) and reverse (fructose-bisphosphatase (FBPase)) reactions. In Trichomonas vaginalis (strain ATCC PRA-98 / G3), this protein is Pyrophosphate--fructose 6-phosphate 1-phosphotransferase 3 (pfk3).